Here is a 196-residue protein sequence, read N- to C-terminus: DnaA initiator-associating protein DiaA (196 aa).

Positions 34-196 (LVHSLLNGNK…DNTLFLHQDD (163 aa)) constitute an SIS domain.

It belongs to the SIS family. DiaA subfamily. Homotetramer; dimer of dimers.

Functionally, required for the timely initiation of chromosomal replication via direct interactions with the DnaA initiator protein. The chain is DnaA initiator-associating protein DiaA from Salmonella paratyphi A (strain ATCC 9150 / SARB42).